The primary structure comprises 450 residues: Crinkler effector protein 63 (450 aa).

The N-terminal stretch at 1-17 is a signal peptide; it reads MVKLFCAIVGAAGSAFP. The tract at residues 18-55 is LQLFLAK domain; that stretch reads VDIDAGQSAGDLKDAIKAKNPATITCDAKDLQLSLAKT. The DWL domain stretch occupies residues 58–117; sequence GAWLPDDDQAALDLEDGKVHEDIQALIDGEKMKATWTIEDVLTANNMTKRKGRAPKSRQI. The N-linked (GlcNAc...) asparagine glycan is linked to N103. Residues 118-124 carry the HVLVXXP motif motif; the sequence is HVLVVVP. The effector domain stretch occupies residues 125–450; it reads EGAFGSASET…RSIPTFSYFS (326 aa). A Nuclear localization signal (NLS) motif is present at residues 218–224; sequence QRKRYRR. N-linked (GlcNAc...) asparagine glycosylation is present at N342.

This sequence belongs to the Crinkler effector family. As to quaternary structure, forms a homodimer via an inverted association manner. Forms heterodimers with CRN79 and CRN115.

The protein localises to the secreted. It is found in the host nucleus. The protein resides in the host nucleoplasm. Its function is as follows. Secreted effector that, with CRN115, is critical to pathogenesis by modulating host defenses. Induces cell death in plant host cells. Suppresses callose deposition and affects expression of defense-related genes including two salicylic acid (SA) signal-induced and antimicrobial PR genes (PR1 and PR2), and genes involved in jasmonic acid (JA)/ethylene (ET)-mediated defense pathway (ERF1, ORA59, PDF1.2). CRN115 and CRN63 may share the same molecular host targets that are involved in the cell death signal transduction pathway and that their differential activities are dependent on plant nuclear localization or not. Does not affect MAPK activation and BIK1 phosphorylation and acts downstream of the MAPK cascades in PTI signaling. The protein is Crinkler effector protein 63 of Phytophthora sojae (strain P6497) (Soybean stem and root rot agent).